The chain runs to 504 residues: Lysine--tRNA ligase (504 aa).

Residues Glu411 and Glu418 each contribute to the Mg(2+) site.

It belongs to the class-II aminoacyl-tRNA synthetase family. As to quaternary structure, homodimer. It depends on Mg(2+) as a cofactor.

The protein resides in the cytoplasm. The enzyme catalyses tRNA(Lys) + L-lysine + ATP = L-lysyl-tRNA(Lys) + AMP + diphosphate. This chain is Lysine--tRNA ligase, found in Clostridium botulinum (strain Loch Maree / Type A3).